The chain runs to 407 residues: Bifunctional enzyme IspD/IspF (407 aa).

Residues 1-246 (MQPLAEATTI…RQDHVSFPDI (246 aa)) form a 2-C-methyl-D-erythritol 4-phosphate cytidylyltransferase region. Residues 247-407 (RTGNGYDVHS…TVIYPGEVPE (161 aa)) are 2-C-methyl-D-erythritol 2,4-cyclodiphosphate synthase. Residues Asp-253 and His-255 each contribute to the a divalent metal cation site. Residues 253 to 255 (DVH) and 279 to 280 (HS) each bind 4-CDP-2-C-methyl-D-erythritol 2-phosphate. His-287 lines the a divalent metal cation pocket. 4-CDP-2-C-methyl-D-erythritol 2-phosphate-binding positions include 301-303 (DIG), 377-380 (TTNE), Phe-384, and Arg-387.

The protein in the N-terminal section; belongs to the IspD/TarI cytidylyltransferase family. IspD subfamily. In the C-terminal section; belongs to the IspF family. A divalent metal cation is required as a cofactor.

The enzyme catalyses 2-C-methyl-D-erythritol 4-phosphate + CTP + H(+) = 4-CDP-2-C-methyl-D-erythritol + diphosphate. It carries out the reaction 4-CDP-2-C-methyl-D-erythritol 2-phosphate = 2-C-methyl-D-erythritol 2,4-cyclic diphosphate + CMP. It functions in the pathway isoprenoid biosynthesis; isopentenyl diphosphate biosynthesis via DXP pathway; isopentenyl diphosphate from 1-deoxy-D-xylulose 5-phosphate: step 2/6. Its pathway is isoprenoid biosynthesis; isopentenyl diphosphate biosynthesis via DXP pathway; isopentenyl diphosphate from 1-deoxy-D-xylulose 5-phosphate: step 4/6. Its function is as follows. Bifunctional enzyme that catalyzes the formation of 4-diphosphocytidyl-2-C-methyl-D-erythritol from CTP and 2-C-methyl-D-erythritol 4-phosphate (MEP) (IspD), and catalyzes the conversion of 4-diphosphocytidyl-2-C-methyl-D-erythritol 2-phosphate (CDP-ME2P) to 2-C-methyl-D-erythritol 2,4-cyclodiphosphate (ME-CPP) with a corresponding release of cytidine 5-monophosphate (CMP) (IspF). This Brucella anthropi (strain ATCC 49188 / DSM 6882 / CCUG 24695 / JCM 21032 / LMG 3331 / NBRC 15819 / NCTC 12168 / Alc 37) (Ochrobactrum anthropi) protein is Bifunctional enzyme IspD/IspF.